The sequence spans 178 residues: Epididymal-specific lipocalin-9 (178 aa).

A signal peptide spans 1 to 16 (MVLLLVLGLVLSLATA). 3 N-linked (GlcNAc...) asparagine glycosylation sites follow: asparagine 46, asparagine 68, and asparagine 129. Cysteine 83 and cysteine 176 form a disulfide bridge.

The protein belongs to the calycin superfamily. Lipocalin family. Expressed in epididymis. Not detected in all other tissues tested.

Its subcellular location is the secreted. This chain is Epididymal-specific lipocalin-9 (Lcn9), found in Mus musculus (Mouse).